A 552-amino-acid polypeptide reads, in one-letter code: uncharacterized protein (552 aa).

The next 4 helical transmembrane spans lie at 127 to 147 (AIMLSFILILFQPFFIIISLL), 160 to 180 (LIIVTCIILSTLIALLSYINI), 393 to 413 (LTKQISLFLSISLFLCCLSAV), and 517 to 537 (VIDSWFDEVYAFACVFTFICI).

It is found in the membrane. This is an uncharacterized protein from Saccharomyces cerevisiae (strain ATCC 204508 / S288c) (Baker's yeast).